The chain runs to 877 residues: Clumping factor B (877 aa).

Residues 1-44 (MKKRIDYLSNKQNKYSIRRFTVGTTSVIVGATILFGIGNHQAQA) form the signal peptide. Positions 15–26 (YSIRRFTVGTTS) match the YSIRK-G/S signaling motif motif. Polar residues-rich tracts occupy residues 44-61 (ASEQ…NASA) and 68-95 (MIET…NVDS). Residues 44–192 (ASEQSNDTTQ…QGTSKPSVRT (149 aa)) are disordered. The tract at residues 45 to 542 (SEQSNDTTQS…GSADGDSAVN (498 aa)) is ligand binding A region. Residues 96–119 (TTKPMSTQTSNTTTTEPASTNETP) are compositionally biased toward low complexity. Positions 120–189 (QPTAIKNQAT…SNAQGTSKPS (70 aa)) are enriched in polar residues. The MIDAS-like motif motif lies at 272–276 (DYSNS). The segment at 530 to 849 (YGGGSADGDS…ETGDKSENTN (320 aa)) is disordered. The span at 545–555 (DPTPGPPVDPE) shows a compositional bias: pro residues. Acidic residues predominate over residues 556 to 801 (PSPDPEPEPT…SDSDSDSDSD (246 aa)). A compositionally biased stretch (polar residues) spans 805–816 (RVTPPNNEQKAP). The span at 833 to 846 (HKTDALPETGDKSE) shows a compositional bias: basic and acidic residues. The LPXTG sorting signal motif lies at 838–842 (LPETG). At Thr841 the chain carries Pentaglycyl murein peptidoglycan amidated threonine. Positions 842 to 877 (GDKSENTNATLFGAMMALLGSLLLFRKRKQDHKEKA) are cleaved as a propeptide — removed by sortase.

The protein belongs to the serine-aspartate repeat-containing protein (SDr) family. In terms of processing, proteolytically cleaved by aureolysin (aur). This cleavage leads to the inactivation of ClfB.

Its subcellular location is the secreted. It is found in the cell wall. Its function is as follows. Cell surface-associated protein implicated in virulence by promoting bacterial attachment to both alpha- and beta-chains of human fibrinogen and inducing the formation of bacterial clumps. The polypeptide is Clumping factor B (clfB) (Staphylococcus aureus (strain Mu50 / ATCC 700699)).